The chain runs to 287 residues: Formamidopyrimidine-DNA glycosylase (287 aa).

Catalysis depends on P2, which acts as the Schiff-base intermediate with DNA. Catalysis depends on E3, which acts as the Proton donor. The active-site Proton donor; for beta-elimination activity is the K58. Residues H104, R123, and R166 each contribute to the DNA site. The FPG-type zinc finger occupies 251–287 (RVYDREGQPCPTPGCKGMIGREVQAGRSTFFCPVCQV). R277 functions as the Proton donor; for delta-elimination activity in the catalytic mechanism.

The protein belongs to the FPG family. As to quaternary structure, monomer. It depends on Zn(2+) as a cofactor.

The catalysed reaction is Hydrolysis of DNA containing ring-opened 7-methylguanine residues, releasing 2,6-diamino-4-hydroxy-5-(N-methyl)formamidopyrimidine.. It catalyses the reaction 2'-deoxyribonucleotide-(2'-deoxyribose 5'-phosphate)-2'-deoxyribonucleotide-DNA = a 3'-end 2'-deoxyribonucleotide-(2,3-dehydro-2,3-deoxyribose 5'-phosphate)-DNA + a 5'-end 5'-phospho-2'-deoxyribonucleoside-DNA + H(+). Its function is as follows. Involved in base excision repair of DNA damaged by oxidation or by mutagenic agents. Acts as a DNA glycosylase that recognizes and removes damaged bases. Has a preference for oxidized purines, such as 7,8-dihydro-8-oxoguanine (8-oxoG). Has AP (apurinic/apyrimidinic) lyase activity and introduces nicks in the DNA strand. Cleaves the DNA backbone by beta-delta elimination to generate a single-strand break at the site of the removed base with both 3'- and 5'-phosphates. The protein is Formamidopyrimidine-DNA glycosylase of Caulobacter sp. (strain K31).